A 223-amino-acid chain; its full sequence is Small ribosomal subunit protein uS3 (223 aa).

One can recognise a KH type-2 domain in the interval 39 to 117 (IREHLRKKPS…RPELNAKLVA (79 aa)).

Belongs to the universal ribosomal protein uS3 family. In terms of assembly, part of the 30S ribosomal subunit. Forms a tight complex with proteins S10 and S14.

In terms of biological role, binds the lower part of the 30S subunit head. Binds mRNA in the 70S ribosome, positioning it for translation. The sequence is that of Small ribosomal subunit protein uS3 from Chlamydia felis (strain Fe/C-56) (Chlamydophila felis).